The chain runs to 232 residues: Large ribosomal subunit protein uL1 (232 aa).

This sequence belongs to the universal ribosomal protein uL1 family. As to quaternary structure, part of the 50S ribosomal subunit.

Binds directly to 23S rRNA. The L1 stalk is quite mobile in the ribosome, and is involved in E site tRNA release. Functionally, protein L1 is also a translational repressor protein, it controls the translation of the L11 operon by binding to its mRNA. The polypeptide is Large ribosomal subunit protein uL1 (Christiangramia forsetii (strain DSM 17595 / CGMCC 1.15422 / KT0803) (Gramella forsetii)).